A 241-amino-acid polypeptide reads, in one-letter code: B-cell receptor-associated protein 29 (241 aa).

At 1-6 the chain is on the lumenal side; the sequence is MTLQWA. The helical transmembrane segment at 7–27 threads the bilayer; sequence AVATFLYAEIGLILIFCLPFI. Topologically, residues 28 to 43 are cytoplasmic; it reads PPQRWQKIFSFNVWGK. Residues 44–64 traverse the membrane as a helical segment; that stretch reads IATFWNKAFLTIIILLIVLFL. The Lumenal portion of the chain corresponds to 65-103; that stretch reads DAVREVRKYSSVHTIEKSSTSRPDAYEHTQMKLFRSQRN. Residues 104-124 traverse the membrane as a helical segment; that stretch reads LYISGFSLFFWLVLRRLVTLI. At 125–241 the chain is on the cytoplasmic side; sequence TQLAKELSNK…RLERGNKKRL (117 aa). Residues 166-233 are a coiled coil; the sequence is GKDEECVLEA…KEHSELQDRL (68 aa). A disordered region spans residues 198–223; it reads LSKAQNDVMEMKMQSERLSKEYDQLL. The segment covering 206 to 223 has biased composition (basic and acidic residues); the sequence is MEMKMQSERLSKEYDQLL. A Di-lysine motif motif is present at residues 238 to 241; it reads KKRL.

It belongs to the BCAP29/BCAP31 family. As to quaternary structure, homodimer. Heterodimer with BCAP31. Binds CASP8 (isoform 9) as a complex containing BCAP31, BCAP29, BCL2 and/or BCL2L1. Interacts with VAMP3, VAMP1 and membrane IgD immunoglobulins. May interact with ACTG1 and non-muscle myosin II.

The protein resides in the endoplasmic reticulum membrane. Functionally, may play a role in anterograde transport of membrane proteins from the endoplasmic reticulum to the Golgi. May be involved in CASP8-mediated apoptosis. The sequence is that of B-cell receptor-associated protein 29 (BCAP29) from Homo sapiens (Human).